A 639-amino-acid chain; its full sequence is Threonine--tRNA ligase (639 aa).

In terms of domain architecture, TGS spans 1–61; the sequence is MINITLKDGK…KEDSELEILT (61 aa). A catalytic region spans residues 242-532; that stretch reads DHRKLGKELD…LIEHFAGAFP (291 aa). Zn(2+) contacts are provided by Cys333, His384, and His509.

It belongs to the class-II aminoacyl-tRNA synthetase family. Homodimer. The cofactor is Zn(2+).

The protein localises to the cytoplasm. It catalyses the reaction tRNA(Thr) + L-threonine + ATP = L-threonyl-tRNA(Thr) + AMP + diphosphate + H(+). Functionally, catalyzes the attachment of threonine to tRNA(Thr) in a two-step reaction: L-threonine is first activated by ATP to form Thr-AMP and then transferred to the acceptor end of tRNA(Thr). Also edits incorrectly charged L-seryl-tRNA(Thr). This Clostridium tetani (strain Massachusetts / E88) protein is Threonine--tRNA ligase.